Here is a 280-residue protein sequence, read N- to C-terminus: Acetylglutamate kinase (280 aa).

Substrate-binding positions include 64 to 65, arginine 86, and asparagine 177; that span reads GG.

Belongs to the acetylglutamate kinase family. ArgB subfamily.

It is found in the cytoplasm. The enzyme catalyses N-acetyl-L-glutamate + ATP = N-acetyl-L-glutamyl 5-phosphate + ADP. The protein operates within amino-acid biosynthesis; L-arginine biosynthesis; N(2)-acetyl-L-ornithine from L-glutamate: step 2/4. In terms of biological role, catalyzes the ATP-dependent phosphorylation of N-acetyl-L-glutamate. The chain is Acetylglutamate kinase from Nautilia profundicola (strain ATCC BAA-1463 / DSM 18972 / AmH).